A 112-amino-acid chain; its full sequence is Mediator of RNA polymerase II transcription subunit 22 (112 aa).

Residues Lys-83–Ala-112 form a disordered region. Over residues Leu-96 to Ala-112 the composition is skewed to basic and acidic residues.

It belongs to the Mediator complex subunit 22 family. As to quaternary structure, component of the Mediator complex.

It localises to the nucleus. In terms of biological role, component of the Mediator complex, a coactivator involved in the regulated transcription of nearly all RNA polymerase II-dependent genes. Mediator functions as a bridge to convey information from gene-specific regulatory proteins to the basal RNA polymerase II transcription machinery. Mediator is recruited to promoters by direct interactions with regulatory proteins and serves as a scaffold for the assembly of a functional preinitiation complex with RNA polymerase II and the general transcription factors. In Yarrowia lipolytica (strain CLIB 122 / E 150) (Yeast), this protein is Mediator of RNA polymerase II transcription subunit 22 (SRB6).